The primary structure comprises 257 residues: Probable pectate lyase E (257 aa).

The first 17 residues, 1–17 (MYQKLLLVPLLLTSALA), serve as a signal peptide directing secretion.

This sequence belongs to the polysaccharide lyase 3 family. It depends on Ca(2+) as a cofactor.

The protein resides in the secreted. The catalysed reaction is Eliminative cleavage of (1-&gt;4)-alpha-D-galacturonan to give oligosaccharides with 4-deoxy-alpha-D-galact-4-enuronosyl groups at their non-reducing ends.. Functionally, pectinolytic enzyme consist of four classes of enzymes: pectin lyase, polygalacturonase, pectin methylesterase and rhamnogalacturonase. Among pectinolytic enzymes, pectin lyase is the most important in depolymerization of pectin, since it cleaves internal glycosidic bonds of highly methylated pectins. Favors pectate, the anion, over pectin, the methyl ester. The sequence is that of Probable pectate lyase E (plyE) from Aspergillus flavus (strain ATCC 200026 / FGSC A1120 / IAM 13836 / NRRL 3357 / JCM 12722 / SRRC 167).